The sequence spans 1418 residues: Ankyrin repeat and fibronectin type-III domain-containing protein 1 (1418 aa).

The tract at residues 119–236 is disordered; sequence RDSVCSLPPP…DRGETPSLSE (118 aa). Positions 144–154 are enriched in polar residues; the sequence is PENTSINLSQC. The segment covering 171–186 has biased composition (low complexity); it reads SASPTSSTPLRTTSTP. Over residues 223 to 236 the composition is skewed to basic and acidic residues; it reads LRDHDRGETPSLSE. ANK repeat units lie at residues 419 to 450 and 456 to 485; these read QSSEALFEAVEQQDLDAVQILLFQYTADELDL and EGLTPLDISIMTNNVPIAKLLLKAGGKESP. Residues 556–652 form the Fibronectin type-III domain; sequence APLMVRLSVT…LSQPPSAVPS (97 aa). The interval 893–900 is highly conserved peptide sequence; the sequence is GLYLGYLK. Disordered regions lie at residues 1134–1179, 1321–1343, and 1361–1418; these read VQKN…EVFL, LETPLSIPHSPTTSYSLDEYRQP, and KTSP…SSTL. Over residues 1136-1146 the composition is skewed to polar residues; sequence KNDSTSSNTDY. Residues 1407–1418 show a composition bias toward polar residues; that stretch reads NEQVSEILSSTL.

Its function is as follows. Required for vestibular-related functions. The chain is Ankyrin repeat and fibronectin type-III domain-containing protein 1 (ankfn1) from Danio rerio (Zebrafish).